The primary structure comprises 233 residues: Purine nucleoside phosphorylase DeoD-type (233 aa).

Residue His4 coordinates a purine D-ribonucleoside. Phosphate is bound by residues Gly20, Arg24, Arg43, and 87-90 (RVGS). A purine D-ribonucleoside is bound by residues 178-180 (EME) and 202-203 (SD). The Proton donor role is filled by Asp203.

The protein belongs to the PNP/UDP phosphorylase family. As to quaternary structure, homohexamer; trimer of homodimers.

The catalysed reaction is a purine D-ribonucleoside + phosphate = a purine nucleobase + alpha-D-ribose 1-phosphate. It carries out the reaction a purine 2'-deoxy-D-ribonucleoside + phosphate = a purine nucleobase + 2-deoxy-alpha-D-ribose 1-phosphate. In terms of biological role, catalyzes the reversible phosphorolytic breakdown of the N-glycosidic bond in the beta-(deoxy)ribonucleoside molecules, with the formation of the corresponding free purine bases and pentose-1-phosphate. The polypeptide is Purine nucleoside phosphorylase DeoD-type (Bacillus subtilis (strain 168)).